We begin with the raw amino-acid sequence, 953 residues long: Mannosylglycoprotein endo-beta-mannosidase (953 aa).

The active-site Proton donor is Glu461. Catalysis depends on Glu553, which acts as the Nucleophile.

This sequence belongs to the glycosyl hydrolase 2 family. As to quaternary structure, heterotrimer of 31 kDa, 28 kDa and 42 kDa subunits. Post-translationally, the mature enzyme is proteotically cleaved into 3 subunits of 31 kDa, 28 kDa and 42 kDa. As to expression, ubiquitously expressed.

The enzyme catalyses Hydrolysis of the alpha-D-mannosyl-(1-&gt;6)-beta-D-mannosyl-(1-&gt;4)-N-acetyl-beta-D-glucosaminyl-(1-&gt;4)-N-acetyl-beta-D-glucosaminyl sequence of glycoprotein to alpha-D-mannosyl-(1-&gt;6)-D-mannose and N-acetyl-beta-D-glucosaminyl-(1-&gt;4)-N-acetyl-beta-D-glucosaminyl sequences.. Functionally, glycosidase that specifically hydrolyzes the Man-beta-1,4-GlcNAc linkage in the trimannosyl core structure of N-glycans. Does not hydrolyzes pyridylamino derivatives sugar chains containing Man-alpha-1,3-Man-beta or Xylose-beta-1,2-Man-beta. The chain is Mannosylglycoprotein endo-beta-mannosidase (EBM) from Lilium longiflorum (Trumpet lily).